Here is a 673-residue protein sequence, read N- to C-terminus: Pesticin receptor (673 aa).

Residues 1–22 (MKMTRLYPLALGGLLLPAIANA) form the signal peptide. Residues 30–37 (STLEVTAS) carry the TonB box motif. The 115-residue stretch at 41 to 155 (SRSASANNVS…QGGIINIVTQ (115 aa)) folds into the TBDR plug domain. Positions 160–672 (TPRGYIEGGV…TVGINTRIDF (513 aa)) constitute a TBDR beta-barrel domain. The short motif at 657–673 (QVNMGRTVGINTRIDFF) is the TonB C-terminal box element.

Belongs to the TonB-dependent receptor family.

The protein localises to the cell outer membrane. Functionally, receptor for the bacteriocin pesticin and for the siderophore yersiniabactin. This is Pesticin receptor (fyuA) from Yersinia enterocolitica.